A 76-amino-acid chain; its full sequence is Theta defensin subunit A (76 aa).

Positions 1–22 are cleaved as a signal peptide; it reads MRTFALLTAMLLLVALHAQAEA. Positions 23–64 are excised as a propeptide; the sequence is RQARADEAAAQQQPGADDQGMAHSFTWPENAALPLSESAKGL. The segment at 25 to 45 is disordered; the sequence is ARADEAAAQQQPGADDQGMAH. Residues 30 to 44 show a composition bias toward low complexity; sequence AAAQQQPGADDQGMA. R65 is covalently cross-linked (Cyclopeptide (Arg-Cys) (interchain with C-73 in subunit A); in form BTD-3). A Cyclopeptide (Arg-Cys) (interchain with C-73 in subunit B); in form BTD-1 cross-link involves residue R65. R65 is covalently cross-linked (Cyclopeptide (Arg-Cys) (interchain with C-73 in subunit C); in form BTD-4). A Cyclopeptide (Arg-Cys) (interchain with C-73 in subunit D); in form BTD-7 cross-link involves residue R65. A disulfide bridge links C68 with C73. A Cyclopeptide (Cys-Arg) (interchain with R-65 in subunit A); in form BTD-3 cross-link involves residue C73. C73 is covalently cross-linked (Cyclopeptide (Cys-Arg) (interchain with R-65 in subunit B); in form BTD-1). C73 is covalently cross-linked (Cyclopeptide (Cys-Arg) (interchain with R-65 in subunit C); in form BTD-4). C73 is covalently cross-linked (Cyclopeptide (Cys-Arg) (interchain with R-65 in subunit D); in form BTD-7). The propeptide occupies 74 to 76; sequence RLL.

The protein belongs to the alpha-defensin family. Theta subfamily. As to quaternary structure, BTD-1 is a cyclic heterodimer composed of subunits A and B; disulfide-linked. BTD-3 is a cyclic homodimer composed of two subunits A; disulfide-linked. BTD-4 is a cyclic heterodimer composed of subunits A and C; disulfide-linked. BTD-7 is a cyclic heterodimer composed of subunits A and D; disulfide-linked. In terms of processing, forms a cyclic peptide with subunit B (BTD-1), subunit A (BTD-3), subunit C (BTD-4), or subunit D (BTD-7). An additional intersubunit disulfide bond is formed.

Its function is as follows. BTD-1, BTD-3, BTD-4 and BTD-7 have antimicrobial activity against the Gram-negative bacterium E.coli ML35, the Gram-positive bacterium S.aureus 502a, and the fungus C.albicans 16820. BTD-3 is more effective against E.coli than BTD-1, BTD-4 and BTD-7. The polypeptide is Theta defensin subunit A (BTDA) (Papio anubis (Olive baboon)).